The chain runs to 543 residues: Thiamine transport system permease protein ThiP (543 aa).

A run of 12 helical transmembrane segments spans residues 19–39, 64–84, 102–122, 142–162, 205–225, 250–270, 300–320, 343–363, 379–399, 406–426, 468–488, and 510–530; these read VAGG…LLAL, FTIW…IPIA, LFAL…TSIY, DIYG…PLAV, GMIG…LTLG, AVAL…ILRL, IIVI…VVVS, LALG…LVAA, GASL…FILL, FVMA…PFAV, GMAF…IALF, and FDAA…MMIA. The ABC transmembrane type-1 1 domain maps to 62-266; it reads ARFTIWQAVA…QLALTLLILL (205 aa). Positions 339 to 530 constitute an ABC transmembrane type-1 2 domain; it reads IATSLALGFS…VLCLALMMIA (192 aa).

It belongs to the binding-protein-dependent transport system permease family. CysTW subfamily. As to quaternary structure, the complex is composed of two ATP-binding proteins (ThiQ), two transmembrane proteins (ThiP) and a solute-binding protein (ThiB).

It is found in the cell inner membrane. Its function is as follows. Part of the ABC transporter complex ThiBPQ involved in thiamine import. Probably responsible for the translocation of the substrate across the membrane. The polypeptide is Thiamine transport system permease protein ThiP (thiP) (Brucella suis biovar 1 (strain 1330)).